Reading from the N-terminus, the 675-residue chain is DNA ligase (675 aa).

Residues 32 to 36 (DAEYD), 81 to 82 (SL), and glutamate 113 contribute to the NAD(+) site. Lysine 115 functions as the N6-AMP-lysine intermediate in the catalytic mechanism. Arginine 136, glutamate 173, lysine 291, and lysine 315 together coordinate NAD(+). 4 residues coordinate Zn(2+): cysteine 409, cysteine 412, cysteine 427, and cysteine 433. In terms of domain architecture, BRCT spans 595–675 (SEKTYFFNKK…ELNSLIRIKE (81 aa)).

Belongs to the NAD-dependent DNA ligase family. LigA subfamily. Requires Mg(2+) as cofactor. Mn(2+) is required as a cofactor.

It catalyses the reaction NAD(+) + (deoxyribonucleotide)n-3'-hydroxyl + 5'-phospho-(deoxyribonucleotide)m = (deoxyribonucleotide)n+m + AMP + beta-nicotinamide D-nucleotide.. In terms of biological role, DNA ligase that catalyzes the formation of phosphodiester linkages between 5'-phosphoryl and 3'-hydroxyl groups in double-stranded DNA using NAD as a coenzyme and as the energy source for the reaction. It is essential for DNA replication and repair of damaged DNA. The sequence is that of DNA ligase from Buchnera aphidicola subsp. Acyrthosiphon pisum (strain APS) (Acyrthosiphon pisum symbiotic bacterium).